The sequence spans 189 residues: MNLSATIILAFAMSMDAFAASIGKGATLYKPRFREALRTGLIFGVIEAITPLIGWCIGLFASQYIMEWDHWIAFSLLFILGCRMIFEGMKQRVAETEKMRSHSFWVLVTTAIATSLDAMAIGVGLAFLQVDIVHTAMAIGLATMIMATLGMLIGRYIGPLLGKRAEIIGGIVLIGIGFNILYEHMHLTA.

A run of 6 helical transmembrane segments spans residues 3–23 (LSAT…ASIG), 41–61 (LIFG…GLFA), 65–85 (IMEW…CRMI), 104–124 (FWVL…IGVG), 132–152 (IVHT…LGML), and 167–187 (IIGG…HMHL).

It belongs to the MntP (TC 9.B.29) family.

It localises to the cell inner membrane. Probably functions as a manganese efflux pump. The protein is Putative manganese efflux pump MntP of Yersinia pseudotuberculosis serotype O:1b (strain IP 31758).